The sequence spans 179 residues: ATP synthase subunit b (179 aa).

A helical membrane pass occupies residues 13 to 33; it reads IHIDELVFGLIAFAVIFALVY.

It belongs to the ATPase B chain family. In terms of assembly, F-type ATPases have 2 components, F(1) - the catalytic core - and F(0) - the membrane proton channel. F(1) has five subunits: alpha(3), beta(3), gamma(1), delta(1), epsilon(1). F(0) has three main subunits: a(1), b(2) and c(10-14). The alpha and beta chains form an alternating ring which encloses part of the gamma chain. F(1) is attached to F(0) by a central stalk formed by the gamma and epsilon chains, while a peripheral stalk is formed by the delta and b chains.

It is found in the cell membrane. Its function is as follows. F(1)F(0) ATP synthase produces ATP from ADP in the presence of a proton or sodium gradient. F-type ATPases consist of two structural domains, F(1) containing the extramembraneous catalytic core and F(0) containing the membrane proton channel, linked together by a central stalk and a peripheral stalk. During catalysis, ATP synthesis in the catalytic domain of F(1) is coupled via a rotary mechanism of the central stalk subunits to proton translocation. Component of the F(0) channel, it forms part of the peripheral stalk, linking F(1) to F(0). This is ATP synthase subunit b from Thermobifida fusca (strain YX).